The chain runs to 749 residues: Myosin-binding protein 2 (749 aa).

The chain crosses the membrane as a helical span at residues 17–37; the sequence is ITLILVYAFLEWSLIFFILLN. Positions 164 to 184 are disordered; sequence NLNDSQEETEEKKVPQSHEKL. Residues 173–184 show a composition bias toward basic and acidic residues; it reads EEKKVPQSHEKL. The 99-residue stretch at 411 to 509 folds into the GTD-binding domain; the sequence is LTVDKLKFEL…ELEKELEVYR (99 aa). Positions 589-621 form a coiled coil; the sequence is ERLSILGRLKFLEEKLTDLNNEEDDEEEAKTFE. Residues 608–640 form a disordered region; sequence NNEEDDEEEAKTFESNGSINGNEHIHGKETNGK. The segment covering 630–639 has biased composition (basic and acidic residues); it reads EHIHGKETNG. Positions 676 to 710 form a coiled coil; the sequence is DSEKGENVTIEEEVDELYERLEALEADREFLRHCV.

As to quaternary structure, interacts with myosin XI-K and XI-1. As to expression, expressed in leaf epidermal cells, roots and root hairs.

The protein resides in the endomembrane system. In terms of biological role, membrane-anchored myosin receptors that define a distinct, plant-specific transport vesicle compartment. This is Myosin-binding protein 2 from Arabidopsis thaliana (Mouse-ear cress).